The sequence spans 1001 residues: O-GlcNAcase NagJ (1001 aa).

An N-terminal signal peptide occupies residues 1–30; that stretch reads MKRKMLKRLLTSAFACMFIANGLITTTVRA. The catalytic domain stretch occupies residues 179–469; it reads VSARGIVEGF…WNRAIDMLYG (291 aa). Positions 180–452 constitute a GH84 domain; it reads SARGIVEGFY…TAADYSWNMD (273 aa). Residues G187, K218, and D297 each contribute to the a protein site. Residue D298 is the Proton donor of the active site. A protein contacts are provided by residues Y335, 394–396, D401, and N429; that span reads WWN. 2 coiled-coil regions span residues 515–543 and 573–597; these read KEDA…KANL and VAQL…LNTA. The region spanning 916 to 1001 is the Fibronectin type-III domain; that stretch reads PVRDFKASEI…KESLTLRTAR (86 aa).

Belongs to the glycosyl hydrolase 84 family.

It catalyses the reaction 3-O-(N-acetyl-beta-D-glucosaminyl)-L-seryl-[protein] + H2O = N-acetyl-D-glucosamine + L-seryl-[protein]. The enzyme catalyses 3-O-(N-acetyl-beta-D-glucosaminyl)-L-threonyl-[protein] + H2O = L-threonyl-[protein] + N-acetyl-D-glucosamine. With respect to regulation, inhibited by O-(2-acetamido-2-deoxy-D-glucopyranosylidene)amino-N-phenyl-carbamate (PUGNAc) and streptozotocin. Functionally, binds carbohydrates. Capable of hydrolyzing the glycosidic link of O-GlcNAcylated proteins. Can bind and deglycosylate O-glycosylated peptides from mammals. This is O-GlcNAcase NagJ (nagJ) from Clostridium perfringens (strain ATCC 13124 / DSM 756 / JCM 1290 / NCIMB 6125 / NCTC 8237 / Type A).